We begin with the raw amino-acid sequence, 297 residues long: 33 kDa chaperonin (297 aa).

2 cysteine pairs are disulfide-bonded: Cys239–Cys241 and Cys272–Cys275.

The protein belongs to the HSP33 family. Post-translationally, under oxidizing conditions two disulfide bonds are formed involving the reactive cysteines. Under reducing conditions zinc is bound to the reactive cysteines and the protein is inactive.

It is found in the cytoplasm. In terms of biological role, redox regulated molecular chaperone. Protects both thermally unfolding and oxidatively damaged proteins from irreversible aggregation. Plays an important role in the bacterial defense system toward oxidative stress. In Clostridium acetobutylicum (strain ATCC 824 / DSM 792 / JCM 1419 / IAM 19013 / LMG 5710 / NBRC 13948 / NRRL B-527 / VKM B-1787 / 2291 / W), this protein is 33 kDa chaperonin.